The chain runs to 437 residues: Serine hydroxymethyltransferase (437 aa).

Residues Leu-130 and 134-136 each bind (6S)-5,6,7,8-tetrahydrofolate; that span reads GHL. Lys-239 carries the post-translational modification N6-(pyridoxal phosphate)lysine. Position 363-365 (363-365) interacts with (6S)-5,6,7,8-tetrahydrofolate; that stretch reads TPF.

It belongs to the SHMT family. In terms of assembly, homodimer. The cofactor is pyridoxal 5'-phosphate.

It localises to the cytoplasm. The catalysed reaction is (6R)-5,10-methylene-5,6,7,8-tetrahydrofolate + glycine + H2O = (6S)-5,6,7,8-tetrahydrofolate + L-serine. The protein operates within one-carbon metabolism; tetrahydrofolate interconversion. It functions in the pathway amino-acid biosynthesis; glycine biosynthesis; glycine from L-serine: step 1/1. Functionally, catalyzes the reversible interconversion of serine and glycine with tetrahydrofolate (THF) serving as the one-carbon carrier. This reaction serves as the major source of one-carbon groups required for the biosynthesis of purines, thymidylate, methionine, and other important biomolecules. Also exhibits THF-independent aldolase activity toward beta-hydroxyamino acids, producing glycine and aldehydes, via a retro-aldol mechanism. The protein is Serine hydroxymethyltransferase of Bartonella henselae (strain ATCC 49882 / DSM 28221 / CCUG 30454 / Houston 1) (Rochalimaea henselae).